The chain runs to 456 residues: Keratin, type I cuticular Ha8 (456 aa).

Residues 1 to 104 are head; that stretch reads MTSSYSSSSC…YGENTLNGHE (104 aa). Residues 104–415 form the IF rod domain; that stretch reads EKETMQFLND…NLLESEDCKL (312 aa). Residues 105-139 form a coil 1A region; sequence KETMQFLNDRLANYLEKVRQLEQENAELEATLLER. Positions 140–150 are linker 1; sequence SKCHESTVCPD. Residues 151 to 251 form a coil 1B region; sequence YQSYFHTIEE…HEQEVKILRS (101 aa). The tract at residues 252–267 is linker 12; sequence QLGEKLRIELDIEPTI. Residues 268–411 are coil 2; that stretch reads DLNRVLGEMR…ATYRNLLESE (144 aa). Residues 412 to 456 form a tail region; the sequence is DCKLPCNPCSTSPSCVTAPCAPRPSCGPCTTCGPTCGASTTGSRF.

It belongs to the intermediate filament family.

This chain is Keratin, type I cuticular Ha8 (KRT38), found in Homo sapiens (Human).